The chain runs to 89 residues: Small ribosomal subunit protein uS15 (89 aa).

This sequence belongs to the universal ribosomal protein uS15 family. In terms of assembly, part of the 30S ribosomal subunit. Forms a bridge to the 50S subunit in the 70S ribosome, contacting the 23S rRNA.

In terms of biological role, one of the primary rRNA binding proteins, it binds directly to 16S rRNA where it helps nucleate assembly of the platform of the 30S subunit by binding and bridging several RNA helices of the 16S rRNA. Forms an intersubunit bridge (bridge B4) with the 23S rRNA of the 50S subunit in the ribosome. The sequence is that of Small ribosomal subunit protein uS15 from Klebsiella pneumoniae subsp. pneumoniae (strain ATCC 700721 / MGH 78578).